Consider the following 377-residue polypeptide: Succinyl-diaminopimelate desuccinylase (377 aa).

His67 is a binding site for Zn(2+). Asp69 is an active-site residue. Asp100 contacts Zn(2+). Residue Glu134 is the Proton acceptor of the active site. Zn(2+) contacts are provided by Glu135, Glu163, and His349.

It belongs to the peptidase M20A family. DapE subfamily. Homodimer. It depends on Zn(2+) as a cofactor. Requires Co(2+) as cofactor.

The catalysed reaction is N-succinyl-(2S,6S)-2,6-diaminopimelate + H2O = (2S,6S)-2,6-diaminopimelate + succinate. The protein operates within amino-acid biosynthesis; L-lysine biosynthesis via DAP pathway; LL-2,6-diaminopimelate from (S)-tetrahydrodipicolinate (succinylase route): step 3/3. Its function is as follows. Catalyzes the hydrolysis of N-succinyl-L,L-diaminopimelic acid (SDAP), forming succinate and LL-2,6-diaminopimelate (DAP), an intermediate involved in the bacterial biosynthesis of lysine and meso-diaminopimelic acid, an essential component of bacterial cell walls. In Dechloromonas aromatica (strain RCB), this protein is Succinyl-diaminopimelate desuccinylase.